Reading from the N-terminus, the 405-residue chain is Argininosuccinate synthase (405 aa).

ATP-binding positions include 10–18 (AYSGGLDTS) and Ala37. 2 residues coordinate L-citrulline: Tyr88 and Ser93. Gly118 serves as a coordination point for ATP. L-aspartate-binding residues include Thr120, Asn124, and Asp125. Asn124 serves as a coordination point for L-citrulline. Positions 128, 179, 188, 264, and 276 each coordinate L-citrulline.

The protein belongs to the argininosuccinate synthase family. Type 1 subfamily. Homotetramer.

It localises to the cytoplasm. It carries out the reaction L-citrulline + L-aspartate + ATP = 2-(N(omega)-L-arginino)succinate + AMP + diphosphate + H(+). Its pathway is amino-acid biosynthesis; L-arginine biosynthesis; L-arginine from L-ornithine and carbamoyl phosphate: step 2/3. This Stutzerimonas stutzeri (strain A1501) (Pseudomonas stutzeri) protein is Argininosuccinate synthase.